The primary structure comprises 209 residues: Pyridoxal 5'-phosphate synthase subunit PdxT (209 aa).

Residue 58-60 (GES) coordinates L-glutamine. The active-site Nucleophile is Cys90. L-glutamine is bound by residues Arg119 and 148–149 (IR). Catalysis depends on charge relay system residues His185 and Glu187.

Belongs to the glutaminase PdxT/SNO family. In terms of assembly, in the presence of PdxS, forms a dodecamer of heterodimers. Only shows activity in the heterodimer.

The catalysed reaction is aldehydo-D-ribose 5-phosphate + D-glyceraldehyde 3-phosphate + L-glutamine = pyridoxal 5'-phosphate + L-glutamate + phosphate + 3 H2O + H(+). The enzyme catalyses L-glutamine + H2O = L-glutamate + NH4(+). It functions in the pathway cofactor biosynthesis; pyridoxal 5'-phosphate biosynthesis. In terms of biological role, catalyzes the hydrolysis of glutamine to glutamate and ammonia as part of the biosynthesis of pyridoxal 5'-phosphate. The resulting ammonia molecule is channeled to the active site of PdxS. The protein is Pyridoxal 5'-phosphate synthase subunit PdxT of Clavibacter michiganensis subsp. michiganensis (strain NCPPB 382).